The sequence spans 220 residues: Ribonuclease HII (220 aa).

An RNase H type-2 domain is found at 16–216 (PVFAGIDEAG…VRPNPAAEEQ (201 aa)). A divalent metal cation contacts are provided by D22, E23, and D114.

Belongs to the RNase HII family. Mn(2+) is required as a cofactor. The cofactor is Mg(2+).

It is found in the cytoplasm. It catalyses the reaction Endonucleolytic cleavage to 5'-phosphomonoester.. Its function is as follows. Endonuclease that specifically degrades the RNA of RNA-DNA hybrids. In Nitratidesulfovibrio vulgaris (strain ATCC 29579 / DSM 644 / CCUG 34227 / NCIMB 8303 / VKM B-1760 / Hildenborough) (Desulfovibrio vulgaris), this protein is Ribonuclease HII.